Reading from the N-terminus, the 453-residue chain is Bifunctional protein GlmU (453 aa).

Residues 1-225 (MNIVILAAGT…EWETLGVNSK (225 aa)) form a pyrophosphorylase region. UDP-N-acetyl-alpha-D-glucosamine contacts are provided by residues 6-9 (LAAG), Lys-20, Gln-71, 76-77 (GT), 98-100 (YGD), Gly-135, Glu-150, Asn-165, and Asn-223. Asp-100 lines the Mg(2+) pocket. Asn-223 is a Mg(2+) binding site. Residues 226–246 (AQLAELERIHQRNVADALLAD) form a linker region. Positions 247–453 (GVTLADPARI…GYVRPVKKKS (207 aa)) are N-acetyltransferase. UDP-N-acetyl-alpha-D-glucosamine-binding residues include Arg-329 and Lys-347. His-359 functions as the Proton acceptor in the catalytic mechanism. Tyr-362 and Asn-373 together coordinate UDP-N-acetyl-alpha-D-glucosamine. Acetyl-CoA-binding positions include Ala-376, 382 to 383 (NY), Ser-401, and Ala-419.

The protein in the N-terminal section; belongs to the N-acetylglucosamine-1-phosphate uridyltransferase family. This sequence in the C-terminal section; belongs to the transferase hexapeptide repeat family. In terms of assembly, homotrimer. The cofactor is Mg(2+).

It localises to the cytoplasm. It carries out the reaction alpha-D-glucosamine 1-phosphate + acetyl-CoA = N-acetyl-alpha-D-glucosamine 1-phosphate + CoA + H(+). It catalyses the reaction N-acetyl-alpha-D-glucosamine 1-phosphate + UTP + H(+) = UDP-N-acetyl-alpha-D-glucosamine + diphosphate. Its pathway is nucleotide-sugar biosynthesis; UDP-N-acetyl-alpha-D-glucosamine biosynthesis; N-acetyl-alpha-D-glucosamine 1-phosphate from alpha-D-glucosamine 6-phosphate (route II): step 2/2. The protein operates within nucleotide-sugar biosynthesis; UDP-N-acetyl-alpha-D-glucosamine biosynthesis; UDP-N-acetyl-alpha-D-glucosamine from N-acetyl-alpha-D-glucosamine 1-phosphate: step 1/1. It participates in bacterial outer membrane biogenesis; LPS lipid A biosynthesis. Catalyzes the last two sequential reactions in the de novo biosynthetic pathway for UDP-N-acetylglucosamine (UDP-GlcNAc). The C-terminal domain catalyzes the transfer of acetyl group from acetyl coenzyme A to glucosamine-1-phosphate (GlcN-1-P) to produce N-acetylglucosamine-1-phosphate (GlcNAc-1-P), which is converted into UDP-GlcNAc by the transfer of uridine 5-monophosphate (from uridine 5-triphosphate), a reaction catalyzed by the N-terminal domain. This chain is Bifunctional protein GlmU, found in Burkholderia multivorans (strain ATCC 17616 / 249).